The primary structure comprises 647 residues: 1-deoxy-D-xylulose-5-phosphate synthase (647 aa).

Thiamine diphosphate-binding positions include His-88 and 129–131 (GHA). Asp-160 contacts Mg(2+). Thiamine diphosphate contacts are provided by residues 161 to 162 (GA), Asn-189, Tyr-300, and Glu-377. Mg(2+) is bound at residue Asn-189.

The protein belongs to the transketolase family. DXPS subfamily. As to quaternary structure, homodimer. Mg(2+) serves as cofactor. Thiamine diphosphate is required as a cofactor.

It catalyses the reaction D-glyceraldehyde 3-phosphate + pyruvate + H(+) = 1-deoxy-D-xylulose 5-phosphate + CO2. It functions in the pathway metabolic intermediate biosynthesis; 1-deoxy-D-xylulose 5-phosphate biosynthesis; 1-deoxy-D-xylulose 5-phosphate from D-glyceraldehyde 3-phosphate and pyruvate: step 1/1. Catalyzes the acyloin condensation reaction between C atoms 2 and 3 of pyruvate and glyceraldehyde 3-phosphate to yield 1-deoxy-D-xylulose-5-phosphate (DXP). In Dehalococcoides mccartyi (strain CBDB1), this protein is 1-deoxy-D-xylulose-5-phosphate synthase.